The following is a 189-amino-acid chain: Glucose-6-phosphate isomerase (189 aa).

The Fe cation site is built by H88, H90, E97, and H136.

Belongs to the archaeal-type GPI family. Homodimer. Fe cation is required as a cofactor.

The protein resides in the cytoplasm. It carries out the reaction alpha-D-glucose 6-phosphate = beta-D-fructose 6-phosphate. It functions in the pathway carbohydrate degradation; glycolysis; D-glyceraldehyde 3-phosphate and glycerone phosphate from D-glucose: step 2/4. In Pyrococcus abyssi (strain GE5 / Orsay), this protein is Glucose-6-phosphate isomerase (pgiA).